The primary structure comprises 178 residues: MSKTGAKISFYEDRNFQGRRYDCDCDCVDFRSYLSRCNSIRVEGGTWAVYERPNFSGHMYILPQGEYPEYQRWMGLNDRLGSCRAVHLSSGGQYKIQIFEKGDFSGQMYETTEDCPSTMERFHLREIHSCKVLEGTWIFYELPSYHGRQYLLDKKEYRKPVDWGAASPAVQSFRRIVE.

Serine 2 is modified (N-acetylserine). Positions 2 to 5 (SKTG) are N-terminal arm. 2 Beta/gamma crystallin 'Greek key' domains span residues 6 to 44 (AKIS…RVEG) and 45 to 87 (GTWA…RAVH). The tract at residues 88–93 (LSSGGQ) is connecting peptide. Beta/gamma crystallin 'Greek key' domains are found at residues 94 to 134 (YKIQ…KVLE) and 135 to 177 (GTWI…RRIV).

This sequence belongs to the beta/gamma-crystallin family. As to quaternary structure, monomer.

Its function is as follows. Crystallins are the dominant structural components of the vertebrate eye lens. The protein is Gamma-crystallin S (Crygs) of Rattus norvegicus (Rat).